The following is a 250-amino-acid chain: NADH-quinone oxidoreductase subunit C (250 aa).

Disordered stretches follow at residues Met-1 to Glu-33 and Leu-228 to Asn-250.

The protein belongs to the complex I 30 kDa subunit family. In terms of assembly, NDH-1 is composed of 14 different subunits. Subunits NuoB, C, D, E, F, and G constitute the peripheral sector of the complex.

The protein resides in the cell membrane. The enzyme catalyses a quinone + NADH + 5 H(+)(in) = a quinol + NAD(+) + 4 H(+)(out). In terms of biological role, NDH-1 shuttles electrons from NADH, via FMN and iron-sulfur (Fe-S) centers, to quinones in the respiratory chain. The immediate electron acceptor for the enzyme in this species is believed to be a menaquinone. Couples the redox reaction to proton translocation (for every two electrons transferred, four hydrogen ions are translocated across the cytoplasmic membrane), and thus conserves the redox energy in a proton gradient. This Nocardioides sp. (strain ATCC BAA-499 / JS614) protein is NADH-quinone oxidoreductase subunit C.